A 480-amino-acid polypeptide reads, in one-letter code: Aspartyl/glutamyl-tRNA(Asn/Gln) amidotransferase subunit B (480 aa).

Belongs to the GatB/GatE family. GatB subfamily. Heterotrimer of A, B and C subunits.

The enzyme catalyses L-glutamyl-tRNA(Gln) + L-glutamine + ATP + H2O = L-glutaminyl-tRNA(Gln) + L-glutamate + ADP + phosphate + H(+). It carries out the reaction L-aspartyl-tRNA(Asn) + L-glutamine + ATP + H2O = L-asparaginyl-tRNA(Asn) + L-glutamate + ADP + phosphate + 2 H(+). Allows the formation of correctly charged Asn-tRNA(Asn) or Gln-tRNA(Gln) through the transamidation of misacylated Asp-tRNA(Asn) or Glu-tRNA(Gln) in organisms which lack either or both of asparaginyl-tRNA or glutaminyl-tRNA synthetases. The reaction takes place in the presence of glutamine and ATP through an activated phospho-Asp-tRNA(Asn) or phospho-Glu-tRNA(Gln). The protein is Aspartyl/glutamyl-tRNA(Asn/Gln) amidotransferase subunit B of Caldicellulosiruptor saccharolyticus (strain ATCC 43494 / DSM 8903 / Tp8T 6331).